The following is a 1365-amino-acid chain: DNA-directed RNA polymerase subunit beta'' (1365 aa).

Positions 224, 295, 302, and 305 each coordinate Zn(2+).

This sequence belongs to the RNA polymerase beta' chain family. RpoC2 subfamily. As to quaternary structure, in plastids the minimal PEP RNA polymerase catalytic core is composed of four subunits: alpha, beta, beta', and beta''. When a (nuclear-encoded) sigma factor is associated with the core the holoenzyme is formed, which can initiate transcription. Zn(2+) is required as a cofactor.

It localises to the plastid. Its subcellular location is the chloroplast. The catalysed reaction is RNA(n) + a ribonucleoside 5'-triphosphate = RNA(n+1) + diphosphate. Functionally, DNA-dependent RNA polymerase catalyzes the transcription of DNA into RNA using the four ribonucleoside triphosphates as substrates. In Fagopyrum esculentum subsp. ancestrale (Wild buckwheat), this protein is DNA-directed RNA polymerase subunit beta''.